A 125-amino-acid chain; its full sequence is Large ribosomal subunit protein bL12 (125 aa).

This sequence belongs to the bacterial ribosomal protein bL12 family. Homodimer. Part of the ribosomal stalk of the 50S ribosomal subunit. Forms a multimeric L10(L12)X complex, where L10 forms an elongated spine to which 2 to 4 L12 dimers bind in a sequential fashion. Binds GTP-bound translation factors.

Forms part of the ribosomal stalk which helps the ribosome interact with GTP-bound translation factors. Is thus essential for accurate translation. The protein is Large ribosomal subunit protein bL12 of Liberibacter africanus (Citrus greening disease).